Here is a 124-residue protein sequence, read N- to C-terminus: Glycine cleavage system H protein (124 aa).

Residues 22-104 (LVITGITDHA…YGKGWIYKIK (83 aa)) enclose the Lipoyl-binding domain. Residue Lys-63 is modified to N6-lipoyllysine.

Belongs to the GcvH family. In terms of assembly, the glycine cleavage system is composed of four proteins: P, T, L and H. The cofactor is (R)-lipoate.

The glycine cleavage system catalyzes the degradation of glycine. The H protein shuttles the methylamine group of glycine from the P protein to the T protein. This Acinetobacter baumannii (strain ACICU) protein is Glycine cleavage system H protein.